A 529-amino-acid chain; its full sequence is Peptide chain release factor 3 (529 aa).

In terms of domain architecture, tr-type G spans Ala11 to Met280. GTP is bound by residues Ser20–Thr27, Asp88–His92, and Asn142–Asp145.

The protein belongs to the TRAFAC class translation factor GTPase superfamily. Classic translation factor GTPase family. PrfC subfamily.

It is found in the cytoplasm. In terms of biological role, increases the formation of ribosomal termination complexes and stimulates activities of RF-1 and RF-2. It binds guanine nucleotides and has strong preference for UGA stop codons. It may interact directly with the ribosome. The stimulation of RF-1 and RF-2 is significantly reduced by GTP and GDP, but not by GMP. This Klebsiella pneumoniae (strain 342) protein is Peptide chain release factor 3.